The sequence spans 282 residues: Protein FRG2-like-2 (282 aa).

Positions 1 to 10 (MGKGNEDPDL) are enriched in basic and acidic residues. Disordered regions lie at residues 1-96 (MGKG…QENC) and 249-282 (GPGD…LGAP). Composition is skewed to polar residues over residues 13–31 (SSIQ…SFTE), 58–68 (RQAGSDPNPNK), and 79–94 (GNST…SYQE).

The protein belongs to the FRG2 family.

It is found in the nucleus. The sequence is that of Protein FRG2-like-2 (FRG2C) from Homo sapiens (Human).